A 433-amino-acid polypeptide reads, in one-letter code: MVNVVLGSQWGDEGKGKLVDLLVGKYDIVARCAGGNNAGHTIVVNGVKYDFHMLPSGLVNPNCQNLLGNGVVIHVPSFFKELETLEAKGLKNARSRLFVSSRAHLVFDFHQVTDKLRELELSGRSKDGKNIGTTGKGIGPTYSTKASRSGLRVHHLVNDQPGAWEEFVARYKRLLETRRQRYGDFEYDFEAKPAEYKKLREQLKPFVVDSVVFMHNAIEAKKKILVEGANALMLDIDFGTYPYVTSSNTGIGGVLTGLGIPPRTIDEIYGVVKAYTTRVGEGPFPTEQLNENGEKLQTIGAEFGVTTGRKRRCGWLDLVVLKYSTLINGYTSLNITKLDVLDTFKEIPVGISYSIQGKKLDLFPEDLNILGKVEVEYKVLPGWDQDITKITKYEDLPENAKKYLKYIEDFVGVPVEWVGTGPARESMLHKEIK.

GTP-binding positions include 11–17 and 39–41; these read GDEGKGK and GHT. The active-site Proton acceptor is the D12. Mg(2+) contacts are provided by D12 and G39. IMP is bound by residues 12 to 15, 37 to 40, T134, R148, N230, T245, and R309; these read DEGK and NAGH. H40 functions as the Proton donor in the catalytic mechanism. Residue 305-311 participates in substrate binding; sequence VTTGRKR. Residues R311, 337–339, and 419–421 each bind GTP; these read KLD and GTG.

This sequence belongs to the adenylosuccinate synthetase family. In terms of assembly, homodimer. The cofactor is Mg(2+).

Its subcellular location is the cytoplasm. The catalysed reaction is IMP + L-aspartate + GTP = N(6)-(1,2-dicarboxyethyl)-AMP + GDP + phosphate + 2 H(+). The protein operates within purine metabolism; AMP biosynthesis via de novo pathway; AMP from IMP: step 1/2. Functionally, plays an important role in the de novo pathway and in the salvage pathway of purine nucleotide biosynthesis. Catalyzes the first committed step in the biosynthesis of AMP from IMP. This Saccharomyces cerevisiae (strain AWRI1631) (Baker's yeast) protein is Adenylosuccinate synthetase.